A 441-amino-acid chain; its full sequence is SVGFKAGVKDYKLTYYTPEYETKDTDILAAFRVTPQPGVPPEEAGAAVAAESSTGTWTTVWTDGLTSLDRYKGRCYGLEPVAGEENQYIAYVAYPLDLFEEGSVTNMFTSIVGNVFGFKALRALRLEDLRIPVSYIKTFQGPPHGIQVERDKLNKYGRPLLGCTIKPKLGLSAKNYGRAVYECLRGGLDFTKDDENVNSQPFMRWRDRFLFCAEAIYKAQAETGEIKGHYLNATAGTCEEMIKRAVFARELGAPIVMHDYLTGGFTANTSLAHYCRDNGLLLHIHRAMHAVIDRQKNHGMHFRVLAKALRLSGGDHIHAGTVVGKLEGEREITLGFVDLLRDDFVEKDRSRGIYFTQDWVSLPGVLPVASGGIHVWHMPALTEIFGDDSVLQFGGGTLGHPWGNAPGAVANRVALEACVQARNEGRDLAREGNEIIRQACK.

Lysine 5 bears the N6,N6,N6-trimethyllysine mark. Substrate-binding residues include asparagine 114 and threonine 164. Lysine 166 serves as the catalytic Proton acceptor. Residue lysine 168 participates in substrate binding. Mg(2+)-binding residues include lysine 192, aspartate 194, and glutamate 195. Lysine 192 bears the N6-carboxylysine mark. The Proton acceptor role is filled by histidine 285. Substrate contacts are provided by arginine 286, histidine 318, and serine 370.

The protein belongs to the RuBisCO large chain family. Type I subfamily. In terms of assembly, heterohexadecamer of 8 large chains and 8 small chains; disulfide-linked. The disulfide link is formed within the large subunit homodimers. The cofactor is Mg(2+). Post-translationally, the disulfide bond which can form in the large chain dimeric partners within the hexadecamer appears to be associated with oxidative stress and protein turnover.

It is found in the plastid. It localises to the chloroplast. The enzyme catalyses 2 (2R)-3-phosphoglycerate + 2 H(+) = D-ribulose 1,5-bisphosphate + CO2 + H2O. It carries out the reaction D-ribulose 1,5-bisphosphate + O2 = 2-phosphoglycolate + (2R)-3-phosphoglycerate + 2 H(+). Functionally, ruBisCO catalyzes two reactions: the carboxylation of D-ribulose 1,5-bisphosphate, the primary event in carbon dioxide fixation, as well as the oxidative fragmentation of the pentose substrate in the photorespiration process. Both reactions occur simultaneously and in competition at the same active site. This is Ribulose bisphosphate carboxylase large chain from Glycyrrhiza echinata (Licorice).